Here is a 709-residue protein sequence, read N- to C-terminus: Elongation factor G (709 aa).

In terms of domain architecture, tr-type G spans 10–295; that stretch reads NQVRNIGIMA…AVVDYLPSPE (286 aa). GTP-binding positions include 19–26, 91–95, and 145–148; these read AHIDAGKT, DTPGH, and NKMD.

The protein belongs to the TRAFAC class translation factor GTPase superfamily. Classic translation factor GTPase family. EF-G/EF-2 subfamily.

It is found in the cytoplasm. Its function is as follows. Catalyzes the GTP-dependent ribosomal translocation step during translation elongation. During this step, the ribosome changes from the pre-translocational (PRE) to the post-translocational (POST) state as the newly formed A-site-bound peptidyl-tRNA and P-site-bound deacylated tRNA move to the P and E sites, respectively. Catalyzes the coordinated movement of the two tRNA molecules, the mRNA and conformational changes in the ribosome. The chain is Elongation factor G from Bifidobacterium animalis subsp. lactis (strain AD011).